Consider the following 517-residue polypeptide: Probable bifunctional methylthioribulose-1-phosphate dehydratase/enolase-phosphatase E1 (517 aa).

Residues Met-1 to Asp-242 are methylthioribulose-1-phosphate dehydratase. Cys-114 lines the substrate pocket. Zn(2+) contacts are provided by His-132 and His-134. Glu-157 functions as the Proton donor/acceptor; for methylthioribulose-1-phosphate dehydratase activity in the catalytic mechanism. Residue His-207 participates in Zn(2+) binding. The tract at residues Val-278–Ile-517 is enolase-phosphatase E1. Mg(2+)-binding residues include Asp-281 and Glu-283. Substrate is bound by residues Ser-416 to Ser-417 and Lys-450. Asp-476 provides a ligand contact to Mg(2+).

This sequence in the N-terminal section; belongs to the aldolase class II family. MtnB subfamily. The protein in the C-terminal section; belongs to the HAD-like hydrolase superfamily. MasA/MtnC family. Zn(2+) is required as a cofactor. It depends on Mg(2+) as a cofactor.

It catalyses the reaction 5-(methylsulfanyl)-D-ribulose 1-phosphate = 5-methylsulfanyl-2,3-dioxopentyl phosphate + H2O. The catalysed reaction is 5-methylsulfanyl-2,3-dioxopentyl phosphate + H2O = 1,2-dihydroxy-5-(methylsulfanyl)pent-1-en-3-one + phosphate. The protein operates within amino-acid biosynthesis; L-methionine biosynthesis via salvage pathway; L-methionine from S-methyl-5-thio-alpha-D-ribose 1-phosphate: step 2/6. Its pathway is amino-acid biosynthesis; L-methionine biosynthesis via salvage pathway; L-methionine from S-methyl-5-thio-alpha-D-ribose 1-phosphate: step 3/6. It functions in the pathway amino-acid biosynthesis; L-methionine biosynthesis via salvage pathway; L-methionine from S-methyl-5-thio-alpha-D-ribose 1-phosphate: step 4/6. In Zea mays (Maize), this protein is Probable bifunctional methylthioribulose-1-phosphate dehydratase/enolase-phosphatase E1.